Here is a 716-residue protein sequence, read N- to C-terminus: Leucine-rich repeat neuronal protein 1 (716 aa).

An N-terminal signal peptide occupies residues 1–25 (MARMSFVIAACQLVLGLLMTSLTES). The LRRNT domain maps to 26–72 (SIQNSECPQLCVCEIRPWFTPQSTYREATTVDCNDLRLTRIPSNLSS). At 26 to 631 (SIQNSECPQL…DISDQETSTA (606 aa)) the chain is on the extracellular side. LRR repeat units follow at residues 73 to 95 (DTQVLLLQSNNIAKTVDELQQLF), 96 to 117 (NLTELDFSQNNFTNIKEVGLAN), 120 to 141 (QLTTLHLEENQITEMTDYCLQD), 144 to 165 (NLQELYINHNQISTISAHAFAG), 168 to 189 (NLLRLHLNSNKLKVIDSRWFDS), 192 to 213 (NLEILMIGENPVIGILDMNFKP), 216 to 237 (NLRSLVLAGMYLTDIPGNALVG), 240 to 261 (SLESLSFYDNKLVKVPQLALQK), 264 to 285 (NLKFLDLNKNPIHKIQEGDFKN), 313 to 335 (ELTKLEATNNPKLSYIHRLAFRS), and 338 to 359 (ALESLMLNNNALNAIYQKTVES). N-linked (GlcNAc...) asparagine glycosylation is found at asparagine 96 and asparagine 117. The LRRCT domain occupies 371–424 (NPLRCDCVIHWINSNKTNIRFMEPLSMFCAMPPEYKGHQVKEVLIQDSSEQCLP). N-linked (GlcNAc...) asparagine glycosylation is present at asparagine 385. Positions 424-515 (PMISHDSFPN…GADTRVATIK (92 aa)) constitute an Ig-like C2-type domain. Cysteines 447 and 499 form a disulfide. Residue asparagine 517 is glycosylated (N-linked (GlcNAc...) asparagine). One can recognise a Fibronectin type-III domain in the interval 525-617 (QVLKIYVKQT…SCVNVTTKNA (93 aa)). The chain crosses the membrane as a helical span at residues 632-652 (LAAVMGSMFAVISLASIAVYF). Residues 653–716 (AKRFKRKNYH…VDTSRSYYMW (64 aa)) lie on the Cytoplasmic side of the membrane. Residues 691–700 (DSEKDKDGSA) show a composition bias toward basic and acidic residues. Positions 691 to 716 (DSEKDKDGSADTKPTQVDTSRSYYMW) are disordered. Residues 702–716 (TKPTQVDTSRSYYMW) show a composition bias toward polar residues.

It is found in the membrane. In Homo sapiens (Human), this protein is Leucine-rich repeat neuronal protein 1 (LRRN1).